Reading from the N-terminus, the 709-residue chain is Zinc finger CCHC domain-containing protein 8 (709 aa).

The tract at residues 1–47 (MAAGVDFGDLELFEAFDPPEESTPKPVHTRFKDDEEEEDDDDDENGV) is disordered. The residue at position 2 (Ala2) is an N-acetylalanine. 2 stretches are compositionally biased toward acidic residues: residues 8-20 (GDLELFEAFDPPE) and 34-46 (DEEEEDDDDDENG). Residues 48 to 83 (GDAELQEQLRRCEATIEQLRAENQELKRKLNILTRP) are a coiled coil. A CCHC-type zinc finger spans residues 230 to 247 (PHCFNCGSEEHQMKECPM). 2 RBM7 binding regions span residues 289–302 (FKPGVISEELQDAL) and 312–327 (FIYRMRQLGYPPGWLK). 2 disordered regions span residues 409–518 (IQSP…EDAL) and 533–667 (ALQQ…DMSK). Positions 410 to 430 (QSPSMRSSGKRSSSQSSPNSP) are enriched in low complexity. A compositionally biased stretch (pro residues) spans 468–499 (PPLPPGTPPPLPQGTPPPLFTPPLPKGTPPLT). Phosphothreonine occurs at positions 474, 482, 488, and 495. The segment covering 552–562 (LTGNSVASSPC) has biased composition (polar residues). Phosphoserine is present on Ser601. A compositionally biased stretch (polar residues) spans 635 to 645 (MNMSNGSNQQP). 2 positions are modified to phosphoserine: Ser660 and Ser697. An MTREX binding region spans residues 661–709 (PVPDMSKFATGITPFEFENMAESTGMYLRIRNLLKNSPRNQQKNKKTCE).

This sequence belongs to the ZCCHC8 family. Component of a nuclear TRAMP-like complex, an ATP-dependent exosome regulatory complex consisting of a helicase (MTREX), an oligadenylate polymerase (TENT4B or TENT4A), and a substrate specific RNA-binding factor (ZCCHC7 or ZCCHC8). Several TRAMP-like complexes exist with specific compositions and are associated with nuclear, or nucleolar RNA exosomes. Identified in the spliceosome C complex. Component of the nuclear exosome targeting (NEXT) complex composed of MTREX, ZCCHC8, and RBM7 that directs a subset of non-coding short-lived RNAs for exosomal degradation. Interacts with proteins involved in RNA processing and degradation such as MTREX and RBM7; interaction with MTREX enhances MTREX RNA helicase activity and bridges between RBM7 and MTREX. Interacts with TERC, the telomerase RNA component. Phosphorylation at Thr-495 by GSK3 is triggered in cells entering mitosis.

It localises to the nucleus. The protein resides in the nucleoplasm. In terms of biological role, scaffolding subunit of the trimeric nuclear exosome targeting (NEXT) complex that is involved in the surveillance and turnover of aberrant transcripts and non-coding RNAs. NEXT functions as an RNA exosome cofactor that directs a subset of non-coding short-lived RNAs for exosomal degradation. May be involved in pre-mRNA splicing. It is required for 3'-end maturation of telomerase RNA component (TERC), TERC 3'-end targeting to the nuclear RNA exosome, and for telomerase function. The sequence is that of Zinc finger CCHC domain-containing protein 8 (Zcchc8) from Mus musculus (Mouse).